The sequence spans 160 residues: Eosinophil cationic protein (160 aa).

A signal peptide spans 1–27 (MVPKLFTSQICLLLLLGLMGVEGSLHA). Residues 28-72 (RPPQFTKAQWFAIQHINVNPPRCTIAMRVINNYQRRCKNQNTFLR) are required for nearly all of the bactericidal activities; partially involved in LPS-binding. Histidine 42 functions as the Proton acceptor in the catalytic mechanism. Intrachain disulfides connect cysteine 50/cysteine 110, cysteine 64/cysteine 123, cysteine 82/cysteine 138, and cysteine 89/cysteine 98. 3'-nitrotyrosine is present on tyrosine 60. 65–69 (KNQNT) provides a ligand contact to substrate. Asparagine 92 and asparagine 119 each carry an N-linked (GlcNAc...) asparagine glycan. The active-site Proton donor is the histidine 155.

This sequence belongs to the pancreatic ribonuclease family. In terms of assembly, interacts with bacterial lipopolysaccharide (LPS) and lipoteichoic acid (LTA). In vitro interacts with phospholipid bilayers.

Its subcellular location is the secreted. Functionally, cytotoxin and helminthotoxin with low-efficiency ribonuclease activity. Possesses a wide variety of biological activities. Exhibits antibacterial activity. This Macaca fascicularis (Crab-eating macaque) protein is Eosinophil cationic protein (RNASE3).